Reading from the N-terminus, the 449-residue chain is tRNA modification GTPase MnmE (449 aa).

(6S)-5-formyl-5,6,7,8-tetrahydrofolate-binding residues include Arg-24, Glu-85, and Arg-124. The region spanning 220 to 369 is the TrmE-type G domain; that stretch reads GIRTAIAGPP…LEEAIIQAFS (150 aa). Asn-230 provides a ligand contact to K(+). Residues 230-235, 249-255, and 274-277 contribute to the GTP site; these read NVGKSS, SNIAGTT, and DTAG. A Mg(2+)-binding site is contributed by Ser-234. Ser-249, Ile-251, and Thr-254 together coordinate K(+). Position 255 (Thr-255) interacts with Mg(2+). Position 449 (Lys-449) interacts with (6S)-5-formyl-5,6,7,8-tetrahydrofolate.

It belongs to the TRAFAC class TrmE-Era-EngA-EngB-Septin-like GTPase superfamily. TrmE GTPase family. Homodimer. Heterotetramer of two MnmE and two MnmG subunits. It depends on K(+) as a cofactor.

Its subcellular location is the cytoplasm. Functionally, exhibits a very high intrinsic GTPase hydrolysis rate. Involved in the addition of a carboxymethylaminomethyl (cmnm) group at the wobble position (U34) of certain tRNAs, forming tRNA-cmnm(5)s(2)U34. The protein is tRNA modification GTPase MnmE of Akkermansia muciniphila (strain ATCC BAA-835 / DSM 22959 / JCM 33894 / BCRC 81048 / CCUG 64013 / CIP 107961 / Muc).